Consider the following 280-residue polypeptide: Orotidine 5'-phosphate decarboxylase (280 aa).

The Proton donor role is filled by K96.

Belongs to the OMP decarboxylase family. Type 2 subfamily.

It carries out the reaction orotidine 5'-phosphate + H(+) = UMP + CO2. Its pathway is pyrimidine metabolism; UMP biosynthesis via de novo pathway; UMP from orotate: step 2/2. This chain is Orotidine 5'-phosphate decarboxylase, found in Parabacteroides distasonis (strain ATCC 8503 / DSM 20701 / CIP 104284 / JCM 5825 / NCTC 11152).